Reading from the N-terminus, the 224-residue chain is Ribonuclease 3 (224 aa).

The RNase III domain occupies 5–127 (LERLCRRLNY…ILAAIYLDGG (123 aa)). Mg(2+) is bound at residue Glu-40. The active site involves Asp-44. Asp-113 and Glu-116 together coordinate Mg(2+). The active site involves Glu-116. Residues 154-224 (DAKTQLQEFL…AKAMLEQLQG (71 aa)) form the DRBM domain.

This sequence belongs to the ribonuclease III family. Homodimer. Mg(2+) serves as cofactor.

Its subcellular location is the cytoplasm. It carries out the reaction Endonucleolytic cleavage to 5'-phosphomonoester.. In terms of biological role, digests double-stranded RNA. Involved in the processing of primary rRNA transcript to yield the immediate precursors to the large and small rRNAs (23S and 16S). Processes some mRNAs, and tRNAs when they are encoded in the rRNA operon. Processes pre-crRNA and tracrRNA of type II CRISPR loci if present in the organism. In Legionella pneumophila (strain Paris), this protein is Ribonuclease 3.